Consider the following 301-residue polypeptide: tRNA pseudouridine synthase B (301 aa).

Aspartate 38 acts as the Nucleophile in catalysis.

Belongs to the pseudouridine synthase TruB family. Type 1 subfamily.

It carries out the reaction uridine(55) in tRNA = pseudouridine(55) in tRNA. Responsible for synthesis of pseudouridine from uracil-55 in the psi GC loop of transfer RNAs. The sequence is that of tRNA pseudouridine synthase B from Clostridioides difficile (strain 630) (Peptoclostridium difficile).